A 481-amino-acid chain; its full sequence is Argininosuccinate lyase (481 aa).

It belongs to the lyase 1 family. Argininosuccinate lyase subfamily.

The protein localises to the cytoplasm. It catalyses the reaction 2-(N(omega)-L-arginino)succinate = fumarate + L-arginine. The protein operates within amino-acid biosynthesis; L-arginine biosynthesis; L-arginine from L-ornithine and carbamoyl phosphate: step 3/3. This Methanococcus maripaludis (strain C7 / ATCC BAA-1331) protein is Argininosuccinate lyase.